The sequence spans 310 residues: MKTLIRKFSRTAITVVLVILAFIAIFNAWVYYTESPWTRDARFSADVVAIAPDVSGLITQVNVHDNQLVKKGQILFTIDQPRYQKALEEAQADVAYYQVLAQEKRQEAGRRNRLGVQAMSREEIDQANNVLQTVLHQLAKAQATRDLAKLDLERTVIRAPADGWVTNLNVYTGEFITRGSTAVALVKQNSFYVLAYMEETKLEGGRPGYRAEITPLGSNKVLKGTVDSVAAGVTNASSTRDDKGMATIDSNLEWVRLAQRVPVRIRLDNQQENIWPAGTTATVVVTGKQDRDESQDSFFRKMAHRLREFG.

A helical membrane pass occupies residues 12–32 (AITVVLVILAFIAIFNAWVYY).

The protein belongs to the membrane fusion protein (MFP) (TC 8.A.1) family.

Its subcellular location is the cell inner membrane. Forms an efflux pump with AaeB. This is p-hydroxybenzoic acid efflux pump subunit AaeA from Shigella sonnei (strain Ss046).